A 338-amino-acid polypeptide reads, in one-letter code: Tetraacyldisaccharide 4'-kinase (338 aa).

63-70 (TVGGAGKT) lines the ATP pocket.

It belongs to the LpxK family.

It carries out the reaction a lipid A disaccharide + ATP = a lipid IVA + ADP + H(+). It participates in glycolipid biosynthesis; lipid IV(A) biosynthesis; lipid IV(A) from (3R)-3-hydroxytetradecanoyl-[acyl-carrier-protein] and UDP-N-acetyl-alpha-D-glucosamine: step 6/6. Transfers the gamma-phosphate of ATP to the 4'-position of a tetraacyldisaccharide 1-phosphate intermediate (termed DS-1-P) to form tetraacyldisaccharide 1,4'-bis-phosphate (lipid IVA). This Hahella chejuensis (strain KCTC 2396) protein is Tetraacyldisaccharide 4'-kinase.